A 490-amino-acid polypeptide reads, in one-letter code: Cobyric acid synthase (490 aa).

A GATase cobBQ-type domain is found at 250–432; it reads QLEIVVIRLP…LHGLLDNHAW (183 aa). Residue C328 is the Nucleophile of the active site. H424 is a catalytic residue.

This sequence belongs to the CobB/CobQ family. CobQ subfamily.

It functions in the pathway cofactor biosynthesis; adenosylcobalamin biosynthesis. Functionally, catalyzes amidations at positions B, D, E, and G on adenosylcobyrinic A,C-diamide. NH(2) groups are provided by glutamine, and one molecule of ATP is hydrogenolyzed for each amidation. This is Cobyric acid synthase from Gloeobacter violaceus (strain ATCC 29082 / PCC 7421).